Reading from the N-terminus, the 99-residue chain is Acylphosphatase (99 aa).

One can recognise an Acylphosphatase-like domain in the interval 11 to 97; sequence ARRIHVKGKV…VVAQGFTQKP (87 aa). Residues arginine 26 and asparagine 44 contribute to the active site.

This sequence belongs to the acylphosphatase family.

It carries out the reaction an acyl phosphate + H2O = a carboxylate + phosphate + H(+). The chain is Acylphosphatase (acyP) from Rhizorhabdus wittichii (strain DSM 6014 / CCUG 31198 / JCM 15750 / NBRC 105917 / EY 4224 / RW1) (Sphingomonas wittichii).